The following is a 1313-amino-acid chain: Kinesin-like protein KIN-12B (1313 aa).

The tract at residues 1–74 (MKHFMMPRNA…PPRPPSSNPL (74 aa)) is disordered. Polar residues predominate over residues 17 to 26 (ESQSPNPSLT). Positions 96 to 431 (GVKVIVRMKP…LRFAQRAKAI (336 aa)) constitute a Kinesin motor domain. 170-177 (GQTGSGKT) is an ATP binding site. Microtubules-binding stretches follow at residues 298–302 (SSRSH), 331–337 (VDLAGSE), and 380–384 (HIPYR). The tract at residues 429 to 467 (KAIQNKAIVNEVMQDDVNFLREVIRQLRDELQRVKDDKG) is neck. Residues 685 to 709 (ESASPKIRNSRKSLRTTSMSTASQK) are disordered. Residues 699 to 708 (RTTSMSTASQ) are compositionally biased toward polar residues. Coiled coils occupy residues 932-1003 (LDEE…YTDS), 1062-1130 (AEEL…RIRE), and 1167-1241 (EKEV…TEIS).

It belongs to the TRAFAC class myosin-kinesin ATPase superfamily. Kinesin family. KIN-12 subfamily. Homodimer and heterodimer with KIN12A. Interacts with TIO.

The protein resides in the cytoplasm. It localises to the cytoskeleton. The protein localises to the phragmoplast. Functionally, plus-end directed kinesin-like motor enzyme that plays a critical role in the organization of phragmoplast microtubules during cytokinesis. Constitutes a signaling module in association with serine/threonine-protein kinase TIO that is required to support phragmoplast expansion and cell-plate growth in plant cells. The polypeptide is Kinesin-like protein KIN-12B (Arabidopsis thaliana (Mouse-ear cress)).